Here is a 215-residue protein sequence, read N- to C-terminus: Oligoribonuclease (215 aa).

The Exonuclease domain maps to 5–170 (LVWIDCEMTG…ADIHESIREL (166 aa)). Tyr127 is an active-site residue.

The protein belongs to the oligoribonuclease family.

The protein localises to the cytoplasm. Functionally, 3'-to-5' exoribonuclease specific for small oligoribonucleotides. In Mycobacterium ulcerans (strain Agy99), this protein is Oligoribonuclease.